The primary structure comprises 55 residues: Large ribosomal subunit protein bL33 (55 aa).

The protein belongs to the bacterial ribosomal protein bL33 family.

This Micrococcus luteus (strain ATCC 4698 / DSM 20030 / JCM 1464 / CCM 169 / CCUG 5858 / IAM 1056 / NBRC 3333 / NCIMB 9278 / NCTC 2665 / VKM Ac-2230) (Micrococcus lysodeikticus) protein is Large ribosomal subunit protein bL33.